Consider the following 106-residue polypeptide: Large ribosomal subunit protein bL21 (106 aa).

Belongs to the bacterial ribosomal protein bL21 family. Part of the 50S ribosomal subunit. Contacts protein L20.

Its function is as follows. This protein binds to 23S rRNA in the presence of protein L20. The protein is Large ribosomal subunit protein bL21 of Xanthomonas campestris pv. campestris (strain ATCC 33913 / DSM 3586 / NCPPB 528 / LMG 568 / P 25).